A 256-amino-acid chain; its full sequence is DNA repair protein RecO (256 aa).

It belongs to the RecO family.

Functionally, involved in DNA repair and RecF pathway recombination. The protein is DNA repair protein RecO of Rhizobium johnstonii (strain DSM 114642 / LMG 32736 / 3841) (Rhizobium leguminosarum bv. viciae).